A 131-amino-acid polypeptide reads, in one-letter code: D-ribose pyranase (131 aa).

His-20 (proton donor) is an active-site residue. Residues Asp-28, His-98, and 120–122 each bind substrate; that span reads YAN.

The protein belongs to the RbsD / FucU family. RbsD subfamily. As to quaternary structure, homodecamer.

Its subcellular location is the cytoplasm. It carries out the reaction beta-D-ribopyranose = beta-D-ribofuranose. It participates in carbohydrate metabolism; D-ribose degradation; D-ribose 5-phosphate from beta-D-ribopyranose: step 1/2. Functionally, catalyzes the interconversion of beta-pyran and beta-furan forms of D-ribose. The polypeptide is D-ribose pyranase (Bacillus velezensis (strain DSM 23117 / BGSC 10A6 / LMG 26770 / FZB42) (Bacillus amyloliquefaciens subsp. plantarum)).